We begin with the raw amino-acid sequence, 143 residues long: Alpha-amylase/trypsin inhibitor CM16 (143 aa).

An N-terminal signal peptide occupies residues 1–24 (MASKSNCVLLLAAVLVSIFAAVAA).

This sequence belongs to the protease inhibitor I6 (cereal trypsin/alpha-amylase inhibitor) family. In terms of assembly, subunit of the tetrameric inhibitor. In terms of processing, five disulfide bonds, which are essential for the inhibitor activity, are probably present. As to expression, developing endosperm.

It localises to the secreted. Functionally, alpha-amylase/trypsin inhibitor. It could be involved in insect defense mechanisms. The sequence is that of Alpha-amylase/trypsin inhibitor CM16 from Triticum aestivum (Wheat).